The following is a 135-amino-acid chain: Cytochrome c2 (135 aa).

The first 23 residues, 1 to 23 (MKKGFLAAGVFAAVAFASGAALA), serve as a signal peptide directing secretion. 4 residues coordinate heme c: cysteine 37, cysteine 40, histidine 41, and methionine 114.

The protein belongs to the cytochrome c family. In terms of processing, binds 1 heme c group covalently per subunit.

Its function is as follows. Cytochrome c2 is found mainly in purple, non-sulfur, photosynthetic bacteria where it functions as the electron donor to the oxidized bacteriochlorophyll in the photophosphorylation pathway. However, it may also have a role in the respiratory chain and is found in some non-photosynthetic bacteria. The polypeptide is Cytochrome c2 (cycA) (Rhodospirillum rubrum (strain ATCC 11170 / ATH 1.1.1 / DSM 467 / LMG 4362 / NCIMB 8255 / S1)).